Reading from the N-terminus, the 107-residue chain is Small ribosomal subunit protein bS16m (107 aa).

It belongs to the bacterial ribosomal protein bS16 family. Component of the mitochondrial small ribosomal subunit (mt-SSU). Mature N.crassa 74S mitochondrial ribosomes consist of a small (37S) and a large (54S) subunit. The 37S small subunit contains a 16S ribosomal RNA (16S mt-rRNA) and 32 different proteins. The 54S large subunit contains a 23S rRNA (23S mt-rRNA) and 42 different proteins.

It is found in the mitochondrion. Component of the mitochondrial ribosome (mitoribosome), a dedicated translation machinery responsible for the synthesis of mitochondrial genome-encoded proteins, including at least some of the essential transmembrane subunits of the mitochondrial respiratory chain. The mitoribosomes are attached to the mitochondrial inner membrane and translation products are cotranslationally integrated into the membrane. In Neurospora crassa (strain ATCC 24698 / 74-OR23-1A / CBS 708.71 / DSM 1257 / FGSC 987), this protein is Small ribosomal subunit protein bS16m (cyt-21).